Consider the following 374-residue polypeptide: DNA/RNA-binding protein ALBA4 (374 aa).

The protein belongs to the histone-like Alba family.

The protein resides in the cytoplasm. Its subcellular location is the cell cortex. The protein localises to the perinuclear region. Possesses DNA- and RNA-binding activities. Binds to DNA with relaxed sequence specificity. May associate with the subtelomeric TARE6 repeats. Regulates the abundance of transcript sub-populations in a stage-specific manner. Regulates activation of male gametocytes. Participates in the coordination of sporozoite development in the oocyst. The chain is DNA/RNA-binding protein ALBA4 from Plasmodium yoelii yoelii.